The following is a 321-amino-acid chain: MSKPIVMERGVKYRDADKMALIPVKNVITERDALLRKPEWMKIKLPADSTRIQGIKAAMRKNGLHSVCEEASCPNLAECFNHGTATFMILGAICTRRCPFCDVAHGRPVAPDAEEPQKLAQTIADMALRYVVITSVDRDDLRDGGAQHFADCITAIRAKSPEIKIETLVPDFRGRMDRALEILNATPPDVFNHNLENVPRIYRQVRPGADYNWSLKLLERFKEAHPEIPTKSGLMVGLGETNAEIIEVMRDLRRHGVTMLTLGQYLQPSRHHLPVQRYVSPEEFDEMKAEALAMGFTHAACGPFVRSSYHADLQAKGMEVK.

[4Fe-4S] cluster contacts are provided by Cys68, Cys73, Cys79, Cys94, Cys98, Cys101, and Ser308. The 218-residue stretch at 80-297 folds into the Radical SAM core domain; sequence FNHGTATFMI…KAEALAMGFT (218 aa).

This sequence belongs to the radical SAM superfamily. Lipoyl synthase family. Requires [4Fe-4S] cluster as cofactor.

The protein resides in the cytoplasm. It carries out the reaction [[Fe-S] cluster scaffold protein carrying a second [4Fe-4S](2+) cluster] + N(6)-octanoyl-L-lysyl-[protein] + 2 oxidized [2Fe-2S]-[ferredoxin] + 2 S-adenosyl-L-methionine + 4 H(+) = [[Fe-S] cluster scaffold protein] + N(6)-[(R)-dihydrolipoyl]-L-lysyl-[protein] + 4 Fe(3+) + 2 hydrogen sulfide + 2 5'-deoxyadenosine + 2 L-methionine + 2 reduced [2Fe-2S]-[ferredoxin]. It functions in the pathway protein modification; protein lipoylation via endogenous pathway; protein N(6)-(lipoyl)lysine from octanoyl-[acyl-carrier-protein]: step 2/2. Functionally, catalyzes the radical-mediated insertion of two sulfur atoms into the C-6 and C-8 positions of the octanoyl moiety bound to the lipoyl domains of lipoate-dependent enzymes, thereby converting the octanoylated domains into lipoylated derivatives. The protein is Lipoyl synthase of Salmonella arizonae (strain ATCC BAA-731 / CDC346-86 / RSK2980).